The primary structure comprises 527 residues: Protein disulfide-isomerase A2 (527 aa).

The signal sequence occupies residues 1-20 (MDKQLLPVLLLLLGVSGSWG). The disordered stretch occupies residues 20 to 41 (GQGEEPGGPSEVLPEEPTGEEV). The 127-residue stretch at 29–155 (SEVLPEEPTG…IAEWLRRRVG (127 aa)) folds into the Thioredoxin 1 domain. Active-site nucleophile residues include C74 and C77. Residues C74 and C77 are joined by a disulfide bond. N-linked (GlcNAc...) asparagine glycosylation is found at N130 and N287. The region spanning 355–499 (VIAITAASVA…FSKFLDSGGH (145 aa)) is the Thioredoxin 2 domain. Active-site nucleophile residues include C421 and C424. A disulfide bridge links C421 with C424. Residues 495–527 (DSGGHLPKEEPKEPAASAPEAQANSTLGPKEEL) form a disordered region. N-linked (GlcNAc...) asparagine glycosylation is present at N518. The Prevents secretion from ER signature appears at 524–527 (KEEL).

It belongs to the protein disulfide isomerase family. In terms of assembly, part of a large chaperone multiprotein complex comprising DNAJB11, HSP90B1, HSPA5, HYOU, PDIA2, PDIA4, PDIA6, PPIB, SDF2L1, UGGT1 and very small amounts of ERP29, but not, or at very low levels, CALR nor CANX. Glycosylated. As to expression, highly expressed in pancreas.

The protein resides in the endoplasmic reticulum lumen. The enzyme catalyses Catalyzes the rearrangement of -S-S- bonds in proteins.. In terms of biological role, acts as an intracellular estrogen-binding protein. May be involved in modulating cellular levels and biological functions of estrogens in the pancreas. May act as a chaperone that inhibits aggregation of misfolded proteins. This chain is Protein disulfide-isomerase A2, found in Mus musculus (Mouse).